The chain runs to 459 residues: Protein king tubby (459 aa).

Residues 114–205 are disordered; sequence HELEDEESSP…SNGAGGESEG (92 aa). Polar residues predominate over residues 123 to 155; it reads PVTVIEQQQTAPHSANSTHSQRPSTTRQPSFND. Position 152 is a phosphoserine (Ser152).

The protein belongs to the TUB family.

It localises to the cytoplasm. The protein resides in the nucleus. It is found in the cell projection. Its subcellular location is the cilium membrane. The protein localises to the rhabdomere. This Drosophila persimilis (Fruit fly) protein is Protein king tubby.